Consider the following 184-residue polypeptide: Large ribosomal subunit protein uL15 (184 aa).

The segment at 1–45 (MNLSSLRPAKGSVRNKKRVGRGQGSGNGTTAGKGNKGQQARSGYK) is disordered. Residues 21 to 35 (RGQGSGNGTTAGKGN) are compositionally biased toward gly residues.

It belongs to the universal ribosomal protein uL15 family. As to quaternary structure, part of the 50S ribosomal subunit.

Its function is as follows. Binds to the 23S rRNA. This is Large ribosomal subunit protein uL15 from Chlorobium chlorochromatii (strain CaD3).